An 870-amino-acid chain; its full sequence is H(+)/Cl(-) exchange transporter 6 (870 aa).

The Cytoplasmic portion of the chain corresponds to 1–80; sequence MAGCRGSVCC…KKGRRYEAVK (80 aa). 2 helical membrane passes run 81–113 and 128–150; these read WMVVFAIGVCTGLVGLFVDFSVRLFTQLKFGVV and LSLLELLGFNLTFVFLASLLVLI. The short motif at 156–160 is the Selectivity filter part_1 element; sequence GSGIP. Ser157 lines the chloride pocket. An intramembrane region (helical) is located at residues 159 to 166; it reads IPEIKCYL. The next 2 helical transmembrane spans lie at 176 to 194 and 200 to 217; these read RLRTLLCKVFGVLFSVSGG and EGPMIHSGAVVGAGLPQF. A Selectivity filter part_2 motif is present at residues 198–202; sequence GKEGP. Intramembrane regions (helical) lie at residues 241–253 and 257–265; these read FVSAGAAAGVAAA and PIGGTLFSL. 3 consecutive transmembrane segments (helical) span residues 277-294, 335-364, and 371-392; these read TWKVLFCSMSATFTLNFF, GFFVVMGVIGGLLGATFNCLNKRLAKYRMR, and KLVRVLESLLVSLVTTVVVFVA. 3 N-linked (GlcNAc...) asparagine glycosylation sites follow: Asn410, Asn423, and Asn433. Helical transmembrane passes span 463-482 and 488-512; these read PVTLALFFILYFLLACWTFG and GLFVPSLLCGAAFGRLVANVLKSYI. The Selectivity filter part_3 signature appears at 488-492; sequence GLFVP. Phe490 contributes to the chloride binding site. Positions 520 to 534 form an intramembrane region, helical; that stretch reads GTFALIGAAAFLGGV. The segment at residues 535-537 is an intramembrane region (note=Loop between two helices); it reads VRM. The helical intramembrane region spans 538–549; it reads TISLTVILIEST. Residues 550 to 553 constitute an intramembrane region (note=Loop between two helices); sequence NEIT. Residues 554–572 form a helical membrane-spanning segment; sequence YGLPIMVTLMVAKWTGDLF. At 573 to 870 the chain is on the cytoplasmic side; sequence NKGIYDVHIG…ARLRQHYQTL (298 aa). Residue Tyr577 coordinates chloride. A CBS 1 domain is found at 606 to 663; that stretch reads MEPNLTYVYPHTRIQSLVSILRTTVHHAFPVVTENRGNEKEFMKGNQLISNNIKFKKS. An ATP-binding site is contributed by 631–633; the sequence is HHA. Ser774 carries the post-translational modification Phosphoserine. Positions 808–869 constitute a CBS 2 domain; that stretch reads MNPSPFTVSP…QARLRQHYQT (62 aa). Position 850–853 (850–853) interacts with ATP; the sequence is TRHN.

This sequence belongs to the chloride channel (TC 2.A.49) family. ClC-6/CLCN6 subfamily. N-glycosylated on several asparagine residues. In terms of tissue distribution, detected in whole brain and in hippocampus neurons (at protein level). Detected in brain, trigeminus, dorsal root ganglion, spinal cord, eye, kidney, testis, skeletal muscle, thymus and pancreas. Isoform ClC-6c is expressed only in kidney.

The protein resides in the late endosome membrane. The catalysed reaction is 2 chloride(in) + H(+)(out) = 2 chloride(out) + H(+)(in). Functionally, voltage-gated channel mediating the exchange of chloride ions against protons. Functions as antiporter and contributes to the acidification of the late endosome lumen. The CLC channel family contains both chloride channels and proton-coupled anion transporters that exchange chloride or another anion for protons. The presence of conserved gating glutamate residues is typical for family members that function as antiporters. The sequence is that of H(+)/Cl(-) exchange transporter 6 from Mus musculus (Mouse).